The primary structure comprises 1332 residues: DNA-directed RNA polymerase subunit beta' (1332 aa).

The Zn(2+) site is built by Cys60, Cys62, Cys75, and Cys78. Residues Asp535, Asp537, and Asp539 each contribute to the Mg(2+) site. Cys894, Cys977, Cys984, and Cys987 together coordinate Zn(2+).

This sequence belongs to the RNA polymerase beta' chain family. As to quaternary structure, the RNAP catalytic core consists of 2 alpha, 1 beta, 1 beta' and 1 omega subunit. When a sigma factor is associated with the core the holoenzyme is formed, which can initiate transcription. Mg(2+) is required as a cofactor. It depends on Zn(2+) as a cofactor.

The enzyme catalyses RNA(n) + a ribonucleoside 5'-triphosphate = RNA(n+1) + diphosphate. Its function is as follows. DNA-dependent RNA polymerase catalyzes the transcription of DNA into RNA using the four ribonucleoside triphosphates as substrates. This is DNA-directed RNA polymerase subunit beta' from Corynebacterium kroppenstedtii (strain DSM 44385 / JCM 11950 / CIP 105744 / CCUG 35717).